The following is a 67-amino-acid chain: Conotoxin ArMLKM-01 (67 aa).

The signal sequence occupies residues 1 to 24 (MLKMEVVLFTFLVLFPLSTLQLET). Residues 25–51 (DQPVERYVENKQDLNPDESRNFMLPIV) constitute a propeptide that is removed on maturation. 3 cysteine pairs are disulfide-bonded: Cys-54/Cys-65, Cys-55/Cys-63, and Cys-58/Cys-66.

It belongs to the conotoxin M superfamily. Expressed by the venom duct.

Its subcellular location is the secreted. The sequence is that of Conotoxin ArMLKM-01 from Conus arenatus (Sand-dusted cone).